The chain runs to 970 residues: Polycystin-2 (970 aa).

Polar residues predominate over residues 1–11 (MVNSSRVQPQQ). Residues 1 to 182 (MVNSSRVQPQ…GDPLHRHLPL (182 aa)) form a disordered region. Over 1-221 (MVNSSRVQPQ…STDREKYLKS (221 aa)) the chain is Cytoplasmic. A compositionally biased stretch (low complexity) spans 25–45 (GPGRLMAGGAIAGAGLAAPGG). The span at 47–60 (REQRGLEIEMERIR) shows a compositional bias: basic and acidic residues. The segment covering 62–83 (AAARDPPAGASASPSPPLSSCS) has biased composition (low complexity). Phosphoserine is present on residues S76 and S80. Residues 95–109 (EAEEEEEEEEVEGEE) are compositionally biased toward acidic residues. The span at 125-138 (RRSASSSAVSSAGA) shows a compositional bias: low complexity. Residue R139 is modified to Omega-N-methylarginine. Over residues 139–148 (RGRGLGGYHG) the composition is skewed to gly residues. Residues 222–243 (VLRELATYLLFLIVLCILTYGM) traverse the membrane as a helical segment. At 244–470 (MSSSVYYYTR…PVKLIRYVTT (227 aa)) the chain is on the extracellular side. Residues N301, N307, and N330 are each glycosylated (N-linked (GlcNAc...) asparagine). A disulfide bridge connects residues C333 and C346. N-linked (GlcNAc...) asparagine glycosylation is found at N364 and N377. A helical membrane pass occupies residues 471-491 (FDFFLAACEIIFCLFILYYVV). Topologically, residues 492–507 (EEILEIRIHKLHYFRS) are cytoplasmic. A helical membrane pass occupies residues 508–528 (FWNCLDVVIIVLSVVAIGINI). Residues 529-554 (YRTSNVEALLQFLEDQNTFPNFENLA) are Extracellular-facing. A helical transmembrane segment spans residues 555–575 (YWQTQFNNIAAVIVFFVWIKL). Cholesterol is bound at residue Q559. The Cytoplasmic portion of the chain corresponds to 576–599 (FKFINFNRTMSQLSTTMSRCAKDL). The helical transmembrane segment at 600 to 621 (FGFAIMFFIIFLAYAQLAYLVF) threads the bilayer. The Extracellular segment spans residues 622-633 (GTQVDDFSTFQE). Residues 634–648 (CIFTQFRIILGDINF) constitute an intramembrane region (pore-forming). Residue L643 participates in Ca(2+) binding. A Selectivity filter motif is present at residues 643–645 (LGD). Residues 649 to 656 (AEIEEANR) lie on the Extracellular side of the membrane. A helical transmembrane segment spans residues 657–677 (VLGPIYFTTFVFFMFFILLNM). At 678-970 (FLAIINDTYS…GGNGSANIHV (293 aa)) the chain is on the cytoplasmic side. Residues 750-785 (KGHTDAEIEAIFTKYDQDGDQELTEHEHQQMRDDLE) enclose the EF-hand domain. D765, D767, D769, E771, and E776 together coordinate Ca(2+). The disordered stretch occupies residues 766-833 (QDGDQELTEH…HSSRRRGSIS (68 aa)). Over residues 772–797 (LTEHEHQQMRDDLEKEREDLDLDHSS) the composition is skewed to basic and acidic residues. Low complexity predominate over residues 798–809 (LPRPMSSRSFPR). A phosphoserine mark is found at S803, S810, S814, and S831. Positions 805–824 (RSFPRSLDDSEEEDDDDSGH) are linker. The interval 812-823 (DDSEEEDDDDSG) is important for interaction with PACS1 and PACS2. Residues 835-874 (GVSYEEFQVLVRRVDRMEHSIGSIVSKIDAVIVKLEIMER) adopt a coiled-coil conformation. Residues 921 to 970 (DDAASQISHGLGTPLGLNGQPRPRSSRPSSSQSTEGMEGGGGNGSANIHV) are disordered. The segment covering 940–956 (QPRPRSSRPSSSQSTEG) has biased composition (low complexity).

Belongs to the polycystin family. Homotetramer. Component of the heterotetrameric polycystin channel complex with PKD1; the tetramer contains one PKD1 chain and three PKD2 chains. Isoform 1 interacts with PKD1 while isoform 3 does not. Interacts with PKD1L1; probably forms a Ca(2+) channel. Interacts with CD2AP. Interacts with HAX1. Interacts with NEK8. Part of a complex containing AKAP5, ADCY5, ADCY6 and PDE4C. Interacts (via C-terminus) with TRPV4 (via C-terminus). Interacts (via C-terminal acidic region) with PACS1 and PACS2; these interactions retain the protein in the endoplasmic reticulum and prevent trafficking to the cell membrane. Interacts with TMEM33. Form a heterotetramer with TRPC1 with a 2:2 stoichiometry; has distinct channel properties separate from PKD2 or TRPC1 homomers alone. Interacts with TMEM120A; TMEM120A inhibits PKD2 channel activity through the physical association of PKD2 with TMEM120A. Interacts (via N-terminus) with RYR2; regulates RYR2 channel activity. N-glycosylated. The four subunits in a tetramer probably differ in the extent of glycosylation; simultaneous glycosylation of all experimentally validated sites would probably create steric hindrance. In terms of processing, phosphorylated. Phosphorylation is important for protein function; a mutant that lacks the N-terminal phosphorylation sites cannot complement a zebrafish pkd2-deficient mutant. PKD-mediated phosphorylation at the C-terminus regulates its function in the release of Ca(2+) stores from the endoplasmic reticulum. Phosphorylation at Ser-814 regulates PKD2 trafficking. Phosphorylation at Ser-76 is required for PKD2 trafficking to or retention at the lateral plasma membrane. Phosphorylation at Ser-803, Ser-814 and Ser-831 regulates PKD2 channel activity. Post-translationally, sumoylated by SUMO1; sumoylation regulates PKD2 membrane recycling and is necessary for intravascular pressure-induced arterial contractility. As to expression, expressed in mesenchymally derived structures in the developing embryo at day 12.5. In adult, mostly expressed in kidney.

The protein localises to the cell projection. Its subcellular location is the cilium membrane. It is found in the endoplasmic reticulum membrane. It localises to the cell membrane. The protein resides in the basolateral cell membrane. The protein localises to the cytoplasmic vesicle membrane. Its subcellular location is the golgi apparatus. It is found in the vesicle. It localises to the secreted. The protein resides in the extracellular exosome. The enzyme catalyses K(+)(in) = K(+)(out). The catalysed reaction is Na(+)(in) = Na(+)(out). It catalyses the reaction Ca(2+)(in) = Ca(2+)(out). Channel activity is regulated by phosphorylation. Channel activity is regulated by intracellular Ca(2+). At the endoplasmic reticulum membrane (ER), TMEM33 enhances its channel activity. TMEM120A inhibits the channel activity of PKD2, and mediates mechanosensitivity of the PKD2-TMEM120A channel complex. PKD1/PKD2 complex on the plasma membrane is activated by PKD1 N-terminus. Functionally, forms a nonselective cation channel. Can function as a homotetrameric ion channel or can form heteromer with PKD1. Displays distinct function depending on its subcellular localization and regulation by its binding partners. Functions as a cation channel, with a preference for monovalent cations over divalent cations that allows K(+), Na(+) and Ca(2+) influx, with low selectivity for Ca(2+). Involved in fluid-flow mechanosensation in the primary cilium in renal epithelium. In the endoplasmic reticulum, likely functions as a K(+) channel to facilitate Ca(2+) release. The heterotetrameric PKD1/PKD2 channel has higher Ca(2+) permeability than homomeric PKD2 channel and acts as a primarily Ca(2+)-permeable channel. Interacts with and acts as a regulator of a number of other channels, such as TRPV4, TRPC1, IP3R, RYR2, ultimately further affecting intracellular signaling, to modulate intracellular Ca(2+) signaling. Together with TRPV4, forms mechano- and thermosensitive channels in cilium. In cardiomyocytes, PKD2 modulates Ca(2+) release from stimulated RYR2 receptors through direct association. Also involved in left-right axis specification via its role in sensing nodal flow; forms a complex with PKD1L1 in cilia to facilitate flow detection in left-right patterning. Acts as a regulator of cilium length together with PKD1. Mediates systemic blood pressure and contributes to the myogenic response in cerebral arteries though vasoconstriction. The protein is Polycystin-2 of Bos taurus (Bovine).